The chain runs to 79 residues: Sec-independent protein translocase protein TatA (79 aa).

A helical transmembrane segment spans residues 1-21 (MGSLSIWHWIVVIAVVLLLFG). Residues 43-60 (LQDDEKTAEKPDPVKSID) are compositionally biased toward basic and acidic residues. Positions 43 to 79 (LQDDEKTAEKPDPVKSIDHNAPTAAAPTRTDVGSKAV) are disordered.

It belongs to the TatA/E family. As to quaternary structure, the Tat system comprises two distinct complexes: a TatABC complex, containing multiple copies of TatA, TatB and TatC subunits, and a separate TatA complex, containing only TatA subunits. Substrates initially bind to the TatABC complex, which probably triggers association of the separate TatA complex to form the active translocon.

Its subcellular location is the cell inner membrane. Its function is as follows. Part of the twin-arginine translocation (Tat) system that transports large folded proteins containing a characteristic twin-arginine motif in their signal peptide across membranes. TatA could form the protein-conducting channel of the Tat system. In Rhodopseudomonas palustris (strain BisB5), this protein is Sec-independent protein translocase protein TatA.